The following is a 279-amino-acid chain: Probable phosphatase phospho1 (279 aa).

Asp-41 (nucleophile) is an active-site residue. 2 residues coordinate Mg(2+): Asp-41 and Asp-43. Residue Asp-43 is the Proton donor of the active site. The substrate site is built by Asp-52 and Asp-133. Asp-215 contacts Mg(2+).

It belongs to the HAD-like hydrolase superfamily. PHOSPHO family. The cofactor is Mg(2+).

It is found in the extracellular vesicle. The enzyme catalyses phosphoethanolamine + H2O = ethanolamine + phosphate. It catalyses the reaction phosphocholine + H2O = choline + phosphate. Functionally, phosphatase that has a high activity toward phosphoethanolamine (PEA) and phosphocholine (PCho). Involved in the generation of inorganic phosphate for bone mineralization. This chain is Probable phosphatase phospho1 (phospho1), found in Danio rerio (Zebrafish).